The chain runs to 310 residues: Elongation factor Ts (310 aa).

The tract at residues 80–83 is involved in Mg(2+) ion dislocation from EF-Tu; sequence TDFV.

It belongs to the EF-Ts family.

The protein localises to the cytoplasm. Associates with the EF-Tu.GDP complex and induces the exchange of GDP to GTP. It remains bound to the aminoacyl-tRNA.EF-Tu.GTP complex up to the GTP hydrolysis stage on the ribosome. This chain is Elongation factor Ts, found in Beijerinckia indica subsp. indica (strain ATCC 9039 / DSM 1715 / NCIMB 8712).